A 333-amino-acid chain; its full sequence is NADH-quinone oxidoreductase subunit H (333 aa).

8 consecutive transmembrane segments (helical) span residues 15–35 (FFIF…FVTY), 88–108 (FILA…VIPF), 117–137 (IGVG…GVVT), 159–179 (ISYE…AGSL), 191–211 (VWYI…AVAE), 239–259 (WAFF…LITV), 272–294 (GFIP…LIWF), and 313–333 (ILLP…ELFF).

The protein belongs to the complex I subunit 1 family. NDH-1 is composed of 14 different subunits. Subunits NuoA, H, J, K, L, M, N constitute the membrane sector of the complex.

It localises to the cell membrane. It catalyses the reaction a quinone + NADH + 5 H(+)(in) = a quinol + NAD(+) + 4 H(+)(out). In terms of biological role, NDH-1 shuttles electrons from NADH, via FMN and iron-sulfur (Fe-S) centers, to quinones in the respiratory chain. The immediate electron acceptor for the enzyme in this species is believed to be ubiquinone. Couples the redox reaction to proton translocation (for every two electrons transferred, four hydrogen ions are translocated across the cytoplasmic membrane), and thus conserves the redox energy in a proton gradient. This subunit may bind ubiquinone. This is NADH-quinone oxidoreductase subunit H from Bacillus mycoides (strain KBAB4) (Bacillus weihenstephanensis).